The primary structure comprises 482 residues: Aspartyl/glutamyl-tRNA(Asn/Gln) amidotransferase subunit B (482 aa).

This sequence belongs to the GatB/GatE family. GatB subfamily. Heterotrimer of A, B and C subunits.

The catalysed reaction is L-glutamyl-tRNA(Gln) + L-glutamine + ATP + H2O = L-glutaminyl-tRNA(Gln) + L-glutamate + ADP + phosphate + H(+). It catalyses the reaction L-aspartyl-tRNA(Asn) + L-glutamine + ATP + H2O = L-asparaginyl-tRNA(Asn) + L-glutamate + ADP + phosphate + 2 H(+). Its function is as follows. Allows the formation of correctly charged Asn-tRNA(Asn) or Gln-tRNA(Gln) through the transamidation of misacylated Asp-tRNA(Asn) or Glu-tRNA(Gln) in organisms which lack either or both of asparaginyl-tRNA or glutaminyl-tRNA synthetases. The reaction takes place in the presence of glutamine and ATP through an activated phospho-Asp-tRNA(Asn) or phospho-Glu-tRNA(Gln). This is Aspartyl/glutamyl-tRNA(Asn/Gln) amidotransferase subunit B from Thermotoga neapolitana (strain ATCC 49049 / DSM 4359 / NBRC 107923 / NS-E).